The primary structure comprises 965 residues: Aminopeptidase N (965 aa).

Residues 1–8 (MAKGFYIS) are Cytoplasmic-facing. A helical; Signal-anchor for type II membrane protein transmembrane segment spans residues 9–32 (KALGILAILLGVAAVATIIALSVV). A cytosolic Ser/Thr-rich junction region spans residues 33–65 (YAQEKNKNAERGTAAPTSPTGPTTTSATTLDQS). Residues 33-965 (YAQEKNKNAE…VVLNWFKDHS (933 aa)) are Extracellular-facing. Residues 40-65 (NAERGTAAPTSPTGPTTTSATTLDQS) form a disordered region. Positions 44 to 61 (GTAAPTSPTGPTTTSATT) are enriched in low complexity. The segment at 66-965 (KPWNRYRLPT…VVLNWFKDHS (900 aa)) is metalloprotease. Asn-125 is a glycosylation site (N-linked (GlcNAc...) asparagine). Tyr-173 is modified (sulfotyrosine). N-linked (GlcNAc...) asparagine glycans are attached at residues Asn-231, Asn-260, and Asn-316. 349–353 (GAMEN) is a substrate binding site. Zn(2+) is bound at residue His-385. The active-site Proton acceptor is Glu-386. 2 residues coordinate Zn(2+): His-389 and Glu-408. Tyr-416 is subject to Sulfotyrosine. N-linked (GlcNAc...) asparagine glycosylation is found at Asn-508, Asn-569, Asn-624, Asn-680, Asn-734, and Asn-738. 2 disulfide bridges follow: Cys-760–Cys-767 and Cys-797–Cys-833.

The protein belongs to the peptidase M1 family. In terms of assembly, homodimer. Interacts with SLC6A19. It depends on Zn(2+) as a cofactor. In terms of processing, sulfated. N- and O-glycosylated. Post-translationally, may undergo proteolysis and give rise to a soluble form.

Its subcellular location is the cell membrane. It catalyses the reaction Release of an N-terminal amino acid, Xaa-|-Yaa- from a peptide, amide or arylamide. Xaa is preferably Ala, but may be most amino acids including Pro (slow action). When a terminal hydrophobic residue is followed by a prolyl residue, the two may be released as an intact Xaa-Pro dipeptide.. In terms of biological role, broad specificity aminopeptidase which plays a role in the final digestion of peptides generated from hydrolysis of proteins by gastric and pancreatic proteases. Also involved in the processing of various peptides including peptide hormones, such as angiotensin III and IV, neuropeptides, and chemokines. May also be involved the cleavage of peptides bound to major histocompatibility complex class II molecules of antigen presenting cells. May have a role in angiogenesis and promote cholesterol crystallization. May have a role in amino acid transport by acting as binding partner of amino acid transporter SLC6A19 and regulating its activity. This is Aminopeptidase N (ANPEP) from Bos taurus (Bovine).